The chain runs to 273 residues: Large ribosomal subunit protein uL2 (273 aa).

The interval 228–273 is disordered; that stretch reads VDHPHGGGEGKTSGGRHPVTPWGFPTKGKKTRKNKRTSKFIIKKRK. The segment covering 254 to 273 has biased composition (basic residues); it reads KGKKTRKNKRTSKFIIKKRK.

This sequence belongs to the universal ribosomal protein uL2 family. In terms of assembly, part of the 50S ribosomal subunit. Forms a bridge to the 30S subunit in the 70S ribosome.

One of the primary rRNA binding proteins. Required for association of the 30S and 50S subunits to form the 70S ribosome, for tRNA binding and peptide bond formation. It has been suggested to have peptidyltransferase activity; this is somewhat controversial. Makes several contacts with the 16S rRNA in the 70S ribosome. The chain is Large ribosomal subunit protein uL2 from Rickettsia bellii (strain OSU 85-389).